We begin with the raw amino-acid sequence, 878 residues long: Microtubule-associated protein homolog maph-1.1 (878 aa).

2 disordered regions span residues 224 to 425 and 456 to 518; these read ALSD…AQAT and EIPP…PVVP. Composition is skewed to low complexity over residues 241–268, 278–293, 310–321, and 328–339; these read PSARPATTTGTATRPTRPAVPAASAPRA, SRPTTTRNAAPAPRTA, APTRAPVPARSA, and APAKPAANTAKA. Composition is skewed to basic and acidic residues over residues 416–425 and 480–496; these read PPRHEVAQAT and EEDKIPEPVDAFKKPDP.

The protein belongs to the MAP1A/MAP1B/MAP1S family. As to quaternary structure, interacts with dlg-1.

It localises to the cell projection. It is found in the dendrite. The protein localises to the perikaryon. The protein resides in the axon. Its subcellular location is the cytoplasm. It localises to the cytoskeleton. This is Microtubule-associated protein homolog maph-1.1 from Caenorhabditis elegans.